Reading from the N-terminus, the 236-residue chain is TVP38/TMEM64 family membrane protein YdjX (236 aa).

5 helical membrane passes run 7–27, 50–70, 72–92, 156–176, and 192–212; these read FLFA…FGLF, LYIL…ILVI, GGIV…ATLA, IAFW…IVIY, and FILQ…LAKL. Residues 73 to 183 are VTT domain; it reads GIVFGPLLGT…VIYTVMASDL (111 aa).

The protein belongs to the TVP38/TMEM64 family.

The protein localises to the cell membrane. This chain is TVP38/TMEM64 family membrane protein YdjX (ydjX), found in Escherichia coli (strain K12).